Reading from the N-terminus, the 435-residue chain is Minor fimbrial subunit HifE (435 aa).

A signal peptide spans 1–31; sequence MKTLTTYAKYFTPISKIAFLFCFLMGNIAEA.

This sequence belongs to the fimbrial protein family.

Its subcellular location is the fimbrium. Its function is as follows. May be a minor structural protein required for pilus biogenesis. May be the adhesive component in the pili. This Haemophilus influenzae protein is Minor fimbrial subunit HifE (hifE).